The chain runs to 197 residues: uncharacterized protein (197 aa).

A helical transmembrane segment spans residues 7-27 (PISVGQMVLICIFILIILFVI).

The protein belongs to the IIV-6 307L family.

The protein resides in the membrane. This is an uncharacterized protein from Acheta domesticus (House cricket).